An 89-amino-acid chain; its full sequence is UPF0250 protein Bphy_0213 (89 aa).

Belongs to the UPF0250 family.

The sequence is that of UPF0250 protein Bphy_0213 from Paraburkholderia phymatum (strain DSM 17167 / CIP 108236 / LMG 21445 / STM815) (Burkholderia phymatum).